Reading from the N-terminus, the 345-residue chain is MRTQKVFTTIDTHTGGNPTRTLISGLPKLLGETMAEKMLHMKKEYDWIRKLLMNEPRGHDVMSGALLTDPCHPDADIGVIYIETGGYLPMCGHDTIGVCTALIESGLIPVVEPITSLKLDTPAGLVEVDIFVRDGKAKEVSFCNIPAFILKHITVDVENIGTVEADIAYGGNFYAIIDAKSVGLELVPEHASTIIDKAIHIRNIINERFEIIHPEYSFIRGLTHVEFYTDPTHESAHVKNTVVVPPGGIDRSPCGTGTSAKLAVLYANQKIEMNEEFVHESIVGSLFKGCVINTTNVANMEAVVTKITGSAWLMGMHRFFYNEKDPLKEGFLLIPPMEHETEDVK.

The protein belongs to the proline racemase family.

This is an uncharacterized protein from Bacillus anthracis.